The primary structure comprises 374 residues: Ribosomal RNA large subunit methyltransferase G (374 aa).

It belongs to the methyltransferase superfamily. RlmG family.

The protein resides in the cytoplasm. It catalyses the reaction guanosine(1835) in 23S rRNA + S-adenosyl-L-methionine = N(2)-methylguanosine(1835) in 23S rRNA + S-adenosyl-L-homocysteine + H(+). Specifically methylates the guanine in position 1835 (m2G1835) of 23S rRNA. This Pseudomonas syringae pv. tomato (strain ATCC BAA-871 / DC3000) protein is Ribosomal RNA large subunit methyltransferase G.